We begin with the raw amino-acid sequence, 751 residues long: Serine/threonine-protein kinase B-raf (751 aa).

The span at 1–32 (MAALSGGGGSSSGGGGGGGGGGGGGDGGGGAE) shows a compositional bias: gly residues. Positions 1-55 (MAALSGGGGSSSGGGGGGGGGGGGGDGGGGAEQGQALFNGDMEPEAGAGAAASSA) are disordered. Alanine 2 carries the post-translational modification N-acetylalanine. Low complexity predominate over residues 46–55 (AGAGAAASSA). A Phosphoserine modification is found at serine 135. One can recognise an RBD domain in the interval 139–211 (PIVRVFLPNK…TGEELHVEVL (73 aa)). Residues histidine 219, cysteine 232, cysteine 235, cysteine 245, cysteine 248, histidine 253, cysteine 256, and cysteine 264 each coordinate Zn(2+). Residues 288-440 (EASFPETALP…SSDDWEIPDG (153 aa)) are disordered. The span at 297–324 (PSGSSSAPPSDSTGPQILTSPSPSKSIP) shows a compositional bias: low complexity. Phosphoserine is present on serine 316. The segment covering 331–346 (PADEDHRNQFGQRDRS) has biased composition (basic and acidic residues). The residue at position 348 (serine 348) is a Phosphoserine. Threonine 356 bears the Phosphothreonine; by autocatalysis mark. Threonine 379 is subject to Phosphothreonine. Phosphoserine is present on serine 382. Threonine 384 is modified (phosphothreonine). The segment covering 406 to 432 (QRERKSSSSSSSEDRSRMKTLGRRDSS) has biased composition (basic and acidic residues). Serine 431 and serine 432 each carry phosphoserine. In terms of domain architecture, Protein kinase spans 442-702 (ITVGQRIGSG…PQILASIELL (261 aa)). Residues 448-456 (IGSGSFGTV) and lysine 468 each bind ATP. Aspartate 561 functions as the Proton acceptor in the catalytic mechanism. A Glycyl lysine isopeptide (Lys-Gly) (interchain with G-Cter in ubiquitin) cross-link involves residue lysine 563. Omega-N-methylarginine; by PRMT5 is present on arginine 656. 2 positions are modified to phosphoserine: serine 714 and serine 735. Position 738 is a phosphothreonine; by MAPK1 (threonine 738).

The protein belongs to the protein kinase superfamily. TKL Ser/Thr protein kinase family. RAF subfamily. In terms of assembly, monomer. Homodimer. Heterodimerizes with RAF1, and the heterodimer possesses a highly increased kinase activity compared to the respective homodimers or monomers. Heterodimerization is mitogen-regulated and enhanced by 14-3-3 proteins. MAPK1/ERK2 activation can induce a negative feedback that promotes the dissociation of the heterodimer by phosphorylating BRAF at Thr-738. Heterodimerizes (via N-terminus) with KSR1 (via N-terminus) or KSR2 (via N-terminus) in a MAP2K1-dependent manner. Interacts with MAP2K1 and MAP2K2. Found in a complex with at least BRAF, HRAS, MAP2K1, MAPK3 and RGS14. Interacts with RIT1. Interacts (via N-terminus) with RGS14 (via RBD domains); the interaction mediates the formation of a ternary complex with RAF1, a ternary complex inhibited by GNAI1. Interacts with DGKH. Interacts with PRMT5. Interacts with AKAP13, MAP2K1 and KSR1. Identified in a complex with AKAP13, KSR1 and MAP2K1. Interacts with FNIP1 and FNIP2. Zn(2+) serves as cofactor. In terms of processing, phosphorylation at Ser-348 by SGK1 inhibits its activity. Dephosphorylation of Ser-348 by the SHOC2-MRAS-PP1c (SMP) complex consisting of SHOC2, GTP-bound M-Ras/MRAS and the catalytic subunit of protein phosphatase 1 (PPP1CA, PPP1CB or PPP1CC); this relieves inactivation and stimulates kinase activity. Post-translationally, methylation by PRMT5 decreases stability and kinase activity. Ubiquitinated by RNF149; which leads to proteasomal degradation. Polyubiquitinated at Lys-615 in response to EGF.

It is found in the nucleus. The protein resides in the cytoplasm. It localises to the cell membrane. It catalyses the reaction L-seryl-[protein] + ATP = O-phospho-L-seryl-[protein] + ADP + H(+). It carries out the reaction L-threonyl-[protein] + ATP = O-phospho-L-threonyl-[protein] + ADP + H(+). Its activity is regulated as follows. In quiescent cells, maintained in an inactive state via an intramolecular interaction between the protein kinase and N-terminal domains. Following mitogen-mediated cell activation, binds via its RGB domain to active HRAS (GTP-bound) which releases the inhibitory intramolecular interaction between the two domains. This allows the MAP2K1-mediated dimerization of KSR1 or KSR2, and BRAF which activates BRAF. Functionally, involved in the transduction of mitogenic signals from the cell membrane to the nucleus. Phosphorylates MAP2K1, and thereby activates the MAP kinase signal transduction pathway. Phosphorylates PFKFB2. May play a role in the postsynaptic responses of hippocampal neurons. The polypeptide is Serine/threonine-protein kinase B-raf (Mus musculus (Mouse)).